Reading from the N-terminus, the 202-residue chain is Zinc metalloproteinase barnettlysin-1 (202 aa).

Residues 6–200 (RYVELFIVVD…MKENPQCILN (195 aa)) form the Peptidase M12B domain. Glu-9 and Asp-93 together coordinate Ca(2+). 3 disulfide bridges follow: Cys-117–Cys-197, Cys-157–Cys-181, and Cys-159–Cys-164. Residue His-142 participates in Zn(2+) binding. The active site involves Glu-143. 2 residues coordinate Zn(2+): His-146 and His-152. Ca(2+) contacts are provided by Cys-197 and Asn-200.

As to quaternary structure, monomer. It depends on Zn(2+) as a cofactor. Expressed by the venom gland.

The protein resides in the secreted. Functionally, non-hemorrhagic metalloproteinase that hydrolyzes the alpha chains of fibrinogen and fibrin but has no activity on beta- and gamma-chains. Cleaves X-Leu bonds. Inhibits platelet aggregation induced by the von Willebrand factor (VWF) (IC(50) is 1.4 uM) and type I collagen (IC(50) is 3.2 uM). Acts by cleaving the vWF and its receptor GPIb, and by cleaving the collagen-binding Alpha-2A domain of the collagen receptor alpha-2/beta-1 integrin (ITGA2/ITGB1). Also degrades the extracellular matrix protein fibronectin (FN1), but has no effect on laminin and type I collagen. This is Zinc metalloproteinase barnettlysin-1 from Bothrops barnetti (Barnett's lancehead).